Reading from the N-terminus, the 116-residue chain is Ribonuclease P protein component (116 aa).

It belongs to the RnpA family. Consists of a catalytic RNA component (M1 or rnpB) and a protein subunit.

It catalyses the reaction Endonucleolytic cleavage of RNA, removing 5'-extranucleotides from tRNA precursor.. Functionally, RNaseP catalyzes the removal of the 5'-leader sequence from pre-tRNA to produce the mature 5'-terminus. It can also cleave other RNA substrates such as 4.5S RNA. The protein component plays an auxiliary but essential role in vivo by binding to the 5'-leader sequence and broadening the substrate specificity of the ribozyme. This chain is Ribonuclease P protein component, found in Citrifermentans bemidjiense (strain ATCC BAA-1014 / DSM 16622 / JCM 12645 / Bem) (Geobacter bemidjiensis).